The following is a 650-amino-acid chain: Primary amine oxidase 1 (650 aa).

Positions 1-19 (MNTSILAILFLIQCVFTLG) are cleaved as a signal peptide. N-linked (GlcNAc...) asparagine glycans are attached at residues Asn-2, Asn-34, Asn-62, and Asn-149. A disulfide bond links Cys-155 and Cys-176. A glycan (N-linked (GlcNAc...) asparagine) is linked at Asn-235. Residue 308–319 (FMDIGEFGFGRS) participates in substrate binding. The active-site Proton acceptor is the Asp-310. Cys-329 and Cys-355 are disulfide-bonded. 395 to 400 (LGNYDY) contacts substrate. The active-site Schiff-base intermediate with substrate; via topaquinone is the Tyr-398. Tyr-398 is modified (2',4',5'-topaquinone). Cu cation is bound by residues His-453 and His-455. Asp-462 and Asp-464 together coordinate Mn(2+). Asn-486 carries an N-linked (GlcNAc...) asparagine glycan. Mn(2+) contacts are provided by Asp-607 and Ile-608. His-618 lines the Cu cation pocket.

Belongs to the copper/topaquinone oxidase family. Homodimer. It depends on L-topaquinone as a cofactor. Cu cation is required as a cofactor. Zn(2+) serves as cofactor. Requires Mn(2+) as cofactor. In terms of processing, topaquinone (TPQ) is generated by copper-dependent autoxidation of a specific tyrosyl residue. Expressed in the vascular tissues at the division/differentiation transition zone.

Its subcellular location is the secreted. The catalysed reaction is a primary methyl amine + O2 + H2O = an aldehyde + H2O2 + NH4(+). Repressed by semi-carbazide, a specific and irreversible inhibitor of copper amine oxidases. Its function is as follows. Oxidizes preferentially the aliphatic diamine putrescine with production of the corresponding aldehyde, ammonia and hydrogen peroxide. May be involved in the regulation of developmental programmed cell death (PCD) in both vascular tissue and the root cap. Required for jasmonic acid-(MeJA) mediated early protoxylem differentiation associated with putrescine levels reduction and H(2)O(2) accumulation in roots. The polypeptide is Primary amine oxidase 1 (Arabidopsis thaliana (Mouse-ear cress)).